The sequence spans 438 residues: Chromosomal replication initiator protein DnaA (438 aa).

A domain I, interacts with DnaA modulators region spans residues 1 to 71 (MTTKEFLTII…CFEIYDGSKP (71 aa)). Residues 71-100 (PTIEIKLSNEKKSKKEILKEQTQNESTEST) form a domain II region. Positions 101–315 (ILNPSYTFDS…GVLIRINASA (215 aa)) are domain III, AAA+ region. 4 residues coordinate ATP: Gly145, Gly147, Lys148, and Thr149. The interval 316 to 438 (SLLNQEITLP…LKNKIINSRE (123 aa)) is domain IV, binds dsDNA.

The protein belongs to the DnaA family. Oligomerizes as a right-handed, spiral filament on DNA at oriC.

The protein resides in the cytoplasm. Functionally, plays an essential role in the initiation and regulation of chromosomal replication. ATP-DnaA binds to the origin of replication (oriC) to initiate formation of the DNA replication initiation complex once per cell cycle. Binds the DnaA box (a 9 base pair repeat at the origin) and separates the double-stranded (ds)DNA. Forms a right-handed helical filament on oriC DNA; dsDNA binds to the exterior of the filament while single-stranded (ss)DNA is stabiized in the filament's interior. The ATP-DnaA-oriC complex binds and stabilizes one strand of the AT-rich DNA unwinding element (DUE), permitting loading of DNA polymerase. After initiation quickly degrades to an ADP-DnaA complex that is not apt for DNA replication. Binds acidic phospholipids. The chain is Chromosomal replication initiator protein DnaA from Aliarcobacter butzleri (strain RM4018) (Arcobacter butzleri).